We begin with the raw amino-acid sequence, 142 residues long: Peptide methionine sulfoxide reductase MsrB (142 aa).

The MsrB domain occupies 3 to 126; it reads KEELKKKLSP…NSAALRFIPF (124 aa). Cys-115 acts as the Nucleophile in catalysis.

It belongs to the MsrB Met sulfoxide reductase family.

The enzyme catalyses L-methionyl-[protein] + [thioredoxin]-disulfide + H2O = L-methionyl-(R)-S-oxide-[protein] + [thioredoxin]-dithiol. The polypeptide is Peptide methionine sulfoxide reductase MsrB (Lactococcus lactis subsp. cremoris (strain MG1363)).